A 62-amino-acid chain; its full sequence is Potassium channel toxin kappa-KTx 3.2 (62 aa).

The signal sequence occupies residues 1 to 26 (MKSTLMTASLLILVLLSIVDYASVYA). The propeptide occupies 27–36 (ELIDSEISME). 2 cysteine pairs are disulfide-bonded: Cys-43–Cys-61 and Cys-47–Cys-57.

Belongs to the short scorpion toxin superfamily. Potassium channel inhibitor kappa-KTx family. Kappa-KTx 3 subfamily. As to expression, expressed by the venom gland.

Its subcellular location is the secreted. In terms of biological role, potassium channel inhibitor (Kv). The chain is Potassium channel toxin kappa-KTx 3.2 from Heterometrus petersii (Asian forest scorpion).